The primary structure comprises 255 residues: Hydroxyacylglutathione hydrolase (255 aa).

7 residues coordinate Zn(2+): His56, His58, Asp60, His61, His114, Asp133, and His171.

The protein belongs to the metallo-beta-lactamase superfamily. Glyoxalase II family. As to quaternary structure, monomer. Requires Zn(2+) as cofactor.

The catalysed reaction is an S-(2-hydroxyacyl)glutathione + H2O = a 2-hydroxy carboxylate + glutathione + H(+). Its pathway is secondary metabolite metabolism; methylglyoxal degradation; (R)-lactate from methylglyoxal: step 2/2. Its function is as follows. Thiolesterase that catalyzes the hydrolysis of S-D-lactoyl-glutathione to form glutathione and D-lactic acid. The chain is Hydroxyacylglutathione hydrolase from Rhodopseudomonas palustris (strain HaA2).